The following is a 154-amino-acid chain: Protein X (154 aa).

Positions 68–117 (PCALRFTSARSMETTVNAHQVLPKVLHKRTLGLSAMSTTDLEAYFKDCLF) are mitochondrial targeting sequence.

This sequence belongs to the orthohepadnavirus protein X family. In terms of assembly, may form homodimer. May interact with host CEBPA, CFLAR, CREB1, DDB1, E4F1, HBXIP, HSPD1/HSP60, NFKBIA, POLR2E and SMAD4. Interacts with host SMC5-SMC6 complex and induces its degradation. Interacts with host TRPC4AP; leading to prevent ubiquitination of TRPC4AP. Interacts with host PLSCR1; this interaction promotes ubiquitination and degradation of HBx and impairs HBx-mediated cell proliferation. A fraction may be phosphorylated in insect cells and HepG2 cells, a human hepatoblastoma cell line. Phosphorylated in vitro by host protein kinase C or mitogen-activated protein kinase. N-acetylated in insect cells.

It localises to the host cytoplasm. The protein resides in the host nucleus. The protein localises to the host mitochondrion. Multifunctional protein that plays a role in silencing host antiviral defenses and promoting viral transcription. Does not seem to be essential for HBV infection. May be directly involved in development of cirrhosis and liver cancer (hepatocellular carcinoma). Most of cytosolic activities involve modulation of cytosolic calcium. The effect on apoptosis is controversial depending on the cell types in which the studies have been conducted. May induce apoptosis by localizing in mitochondria and causing loss of mitochondrial membrane potential. May also modulate apoptosis by binding host CFLAR, a key regulator of the death-inducing signaling complex (DISC). Promotes viral transcription by using the host E3 ubiquitin ligase DDB1 to target the SMC5-SMC6 complex to proteasomal degradation. This host complex would otherwise bind to viral episomal DNA, and prevents its transcription. Moderately stimulates transcription of many different viral and cellular transcription elements. Promoters and enhancers stimulated by HBx contain DNA binding sites for NF-kappa-B, AP-1, AP-2, c-EBP, ATF/CREB, or the calcium-activated factor NF-AT. In Homo sapiens (Human), this protein is Protein X.